We begin with the raw amino-acid sequence, 207 residues long: Outer-membrane lipoprotein LolB (207 aa).

Residues 1–21 form the signal peptide; that stretch reads MPTKTVRCLRLLPLASLLLAA. Cys22 is lipidated: N-palmitoyl cysteine. Cys22 carries the S-diacylglycerol cysteine lipid modification.

Belongs to the LolB family. Monomer.

It is found in the cell outer membrane. Functionally, plays a critical role in the incorporation of lipoproteins in the outer membrane after they are released by the LolA protein. The protein is Outer-membrane lipoprotein LolB of Pectobacterium atrosepticum (strain SCRI 1043 / ATCC BAA-672) (Erwinia carotovora subsp. atroseptica).